The primary structure comprises 404 residues: L-cysteine:1D-myo-inositol 2-amino-2-deoxy-alpha-D-glucopyranoside ligase (404 aa).

Position 35 (cysteine 35) interacts with Zn(2+). Residues 35–38 (CGIT), threonine 50, and 73–75 (NVT) each bind L-cysteinyl-5'-AMP. A 'HIGH' region motif is present at residues 37 to 47 (ITPYDATHLGH). The short motif at 178-183 (ERGGDP) is the 'ERGGDP' region element. L-cysteinyl-5'-AMP is bound at residue tryptophan 219. Cysteine 223 contributes to the Zn(2+) binding site. 241 to 243 (GND) contributes to the L-cysteinyl-5'-AMP binding site. Histidine 248 contacts Zn(2+). Isoleucine 275 provides a ligand contact to L-cysteinyl-5'-AMP. The short motif at 281-285 (KMSKS) is the 'KMSKS' region element.

Belongs to the class-I aminoacyl-tRNA synthetase family. MshC subfamily. As to quaternary structure, monomer. Requires Zn(2+) as cofactor.

The enzyme catalyses 1D-myo-inositol 2-amino-2-deoxy-alpha-D-glucopyranoside + L-cysteine + ATP = 1D-myo-inositol 2-(L-cysteinylamino)-2-deoxy-alpha-D-glucopyranoside + AMP + diphosphate + H(+). Its function is as follows. Catalyzes the ATP-dependent condensation of GlcN-Ins and L-cysteine to form L-Cys-GlcN-Ins. The protein is L-cysteine:1D-myo-inositol 2-amino-2-deoxy-alpha-D-glucopyranoside ligase of Salinispora tropica (strain ATCC BAA-916 / DSM 44818 / JCM 13857 / NBRC 105044 / CNB-440).